The chain runs to 489 residues: 5-hydroxytryptamine receptor 3A (489 aa).

An N-terminal signal peptide occupies residues 1-23 (MRLCIPQVLLALFLSMLTAPGEG). The Extracellular portion of the chain corresponds to 24-246 (SRRRATQARD…MKFYVIIRRR (223 aa)). N-linked (GlcNAc...) asparagine glycans are attached at residues N109, N175, and N191. C162 and C176 are joined by a disulfide. Residues 247 to 273 (PLFYAVSLLLPSIFLMVVDIVGFCLPP) traverse the membrane as a helical segment. At 274–278 (DSGER) the chain is on the cytoplasmic side. The chain crosses the membrane as a helical span at residues 279-297 (VSFKITLLLGYSVFLIIVS). Residues 298 to 307 (DTLPATAIGT) are Extracellular-facing. The chain crosses the membrane as a helical span at residues 308–326 (PLIGVYFVVCMALLVISLA). At 327–466 (ETIFIVRLVH…GYVLDRLLFR (140 aa)) the chain is on the cytoplasmic side. An HA-stretch; determines single-channel conductance in 5-HT3 receptors region spans residues 425-461 (AVRGLLQELSSIRHFLEKRDEMREVARDWLRVGYVLD). Residues 467 to 486 (IYLLAVLAYSITLVTLWSIW) form a helical membrane-spanning segment. Over 487-489 (HYS) the chain is Extracellular.

The protein belongs to the ligand-gated ion channel (TC 1.A.9) family. 5-hydroxytryptamine receptor (TC 1.A.9.2) subfamily. HTR3A sub-subfamily. In terms of assembly, forms homopentameric as well as heteropentameric serotonin-activated cation-selective channel complexes with HTR3B or HTR3C or HTR3D or HTR3E. The homomeric complex is functional but exhibits low conductance with modified voltage dependence, and decreased agonist and antagonist affinity. Heteropentameric complexes display properties which resemble that of neuronal serotonin-activated channels in vivo. Interacts with RIC3. As to expression, brain, spinal cord, and heart.

The protein localises to the postsynaptic cell membrane. It localises to the cell membrane. The enzyme catalyses Na(+)(in) = Na(+)(out). It carries out the reaction K(+)(in) = K(+)(out). It catalyses the reaction Ca(2+)(in) = Ca(2+)(out). The catalysed reaction is Mg(2+)(in) = Mg(2+)(out). Forms serotonin (5-hydroxytryptamine/5-HT3)-activated cation-selective channel complexes, which when activated cause fast, depolarizing responses in neurons. The polypeptide is 5-hydroxytryptamine receptor 3A (Mus musculus (Mouse)).